The chain runs to 349 residues: Fe(3+) ions import ATP-binding protein FbpC (349 aa).

An ABC transporter domain is found at 7-237; sequence LVLKNVTKAF…PNSLFLANFM (231 aa). 39–46 contacts ATP; it reads GPSGCGKT.

The protein belongs to the ABC transporter superfamily. Fe(3+) ion importer (TC 3.A.1.10) family. The complex is composed of two ATP-binding proteins (FbpC), two transmembrane proteins (FbpB) and a solute-binding protein (FbpA).

Its subcellular location is the cell inner membrane. It carries out the reaction Fe(3+)(out) + ATP + H2O = Fe(3+)(in) + ADP + phosphate + H(+). In terms of biological role, part of the ABC transporter complex FbpABC involved in Fe(3+) ions import. Responsible for energy coupling to the transport system. The chain is Fe(3+) ions import ATP-binding protein FbpC from Pasteurella multocida (strain Pm70).